The primary structure comprises 235 residues: Probable 2-phosphosulfolactate phosphatase (235 aa).

Belongs to the ComB family. Requires Mg(2+) as cofactor.

It catalyses the reaction (2R)-O-phospho-3-sulfolactate + H2O = (2R)-3-sulfolactate + phosphate. This chain is Probable 2-phosphosulfolactate phosphatase, found in Clostridium novyi (strain NT).